Consider the following 244-residue polypeptide: GTP cyclohydrolase 1 type 2 homolog (244 aa).

The a divalent metal cation site is built by histidine 65, histidine 66, aspartate 102, histidine 216, and glutamate 220.

The protein belongs to the GTP cyclohydrolase I type 2/NIF3 family. As to quaternary structure, homohexamer; trimer of dimers, that forms a hollow cage-like architecture.

In terms of biological role, DNA-binding protein exhibiting the ability to bind to both single-stranded and double-stranded DNA. This chain is GTP cyclohydrolase 1 type 2 homolog, found in Methanocaldococcus jannaschii (strain ATCC 43067 / DSM 2661 / JAL-1 / JCM 10045 / NBRC 100440) (Methanococcus jannaschii).